Reading from the N-terminus, the 309-residue chain is Transcription elongation factor S-II (309 aa).

One can recognise a TFIIS N-terminal domain in the interval 5–79 (EVLVHVKNLE…SSWKDAINKN (75 aa)). A disordered region spans residues 78 to 142 (KNKRSRQAQQ…NSKNDGVDTA (65 aa)). Residues 88–102 (HHQDHAPGNAEDKTT) are compositionally biased toward basic and acidic residues. Polar residues predominate over residues 103–120 (VGESVNGVQQPASSQSDA). S116 carries the post-translational modification Phosphoserine. The region spanning 148-264 (LRDQVLKALY…NAQGATIERS (117 aa)) is the TFIIS central domain. The TFIIS-type zinc-finger motif lies at 267–307 (DRFTCGKCKEKKVSYYQLQTRSADEPLTTFCTCEACGNRWK). Residues C271, C274, C299, and C302 each coordinate Zn(2+).

This sequence belongs to the TFS-II family.

It is found in the nucleus. Necessary for efficient RNA polymerase II transcription elongation past template-encoded arresting sites. The arresting sites in DNA have the property of trapping a certain fraction of elongating RNA polymerases that pass through, resulting in locked ternary complexes. Cleavage of the nascent transcript by S-II allows the resumption of elongation from the new 3'-terminus. In terms of biological role, can promote the transfer of one strand of a double-stranded DNA molecule to a homologous single strand and thus may be involved in recombination. This is Transcription elongation factor S-II (DST1) from Saccharomyces cerevisiae (strain ATCC 204508 / S288c) (Baker's yeast).